We begin with the raw amino-acid sequence, 298 residues long: Tyrosine recombinase XerC (298 aa).

The region spanning 1–83 is the Core-binding (CB) domain; it reads MHAAVERFLH…ALSRFADHLV (83 aa). The Tyr recombinase domain occupies 104-283; that stretch reads HLPRPVDVDQ…DWQHLADAYD (180 aa). Residues arginine 144, lysine 166, histidine 235, arginine 238, and histidine 261 contribute to the active site. The active-site O-(3'-phospho-DNA)-tyrosine intermediate is the tyrosine 270.

It belongs to the 'phage' integrase family. XerC subfamily. In terms of assembly, forms a cyclic heterotetrameric complex composed of two molecules of XerC and two molecules of XerD.

It localises to the cytoplasm. Its function is as follows. Site-specific tyrosine recombinase, which acts by catalyzing the cutting and rejoining of the recombining DNA molecules. The XerC-XerD complex is essential to convert dimers of the bacterial chromosome into monomers to permit their segregation at cell division. It also contributes to the segregational stability of plasmids. The sequence is that of Tyrosine recombinase XerC from Chromohalobacter salexigens (strain ATCC BAA-138 / DSM 3043 / CIP 106854 / NCIMB 13768 / 1H11).